The chain runs to 435 residues: Cell adhesion molecule 2 (435 aa).

An N-terminal signal peptide occupies residues 1–24 (MIWKRSAVLRFYSVCGLLLQGSQG). The Extracellular segment spans residues 25–367 (QFPLTQNVTV…ALAGQNGPDH (343 aa)). One can recognise an Ig-like V-type domain in the interval 27–119 (PLTQNVTVVE…PVKTSKAYLT (93 aa)). N-linked (GlcNAc...) asparagine glycosylation is found at asparagine 31 and asparagine 51. Disulfide bonds link cysteine 44-cysteine 104, cysteine 146-cysteine 203, and cysteine 248-cysteine 296. Ig-like C2-type domains lie at 127 to 219 (PQIS…VAMQ) and 227 to 312 (PSVK…YVLI). N-linked (GlcNAc...) asparagine glycosylation is present at asparagine 291. A helical membrane pass occupies residues 368–388 (ALIGGIVAVVVFVTLCSIFLL). Residues 389–435 (GRYLARHKGTYLTNEAKGAEDAPDADTAIINAEGSQVNAEEKKEYFI) are Cytoplasmic-facing. Serine 423 carries the post-translational modification Phosphoserine.

This sequence belongs to the nectin family.

It localises to the cell membrane. Its subcellular location is the synapse. The protein localises to the cell projection. The protein resides in the axon. Functionally, adhesion molecule that engages in homo- and heterophilic interactions with the other nectin-like family members, leading to cell aggregation. Important for synapse organization, providing regulated trans-synaptic adhesion. Preferentially binds to oligodendrocytes. In terms of biological role, (Microbial infection) Induces cell fusion in neuron infected by a neuropathogenic strain of measles. Interacts with measles hemagglutinin to trigger hyperfusogenic F-mediated membrane fusion and presumably transsynaptic cell-to-cell transmission of the virus. In Homo sapiens (Human), this protein is Cell adhesion molecule 2 (CADM2).